The sequence spans 61 residues: Large ribosomal subunit protein bL28 (61 aa).

Residues 1–26 (MAKDFINGKRTQFGNKRSHALNSSRR) are disordered. The segment covering 9-25 (KRTQFGNKRSHALNSSR) has biased composition (polar residues).

Belongs to the bacterial ribosomal protein bL28 family.

The chain is Large ribosomal subunit protein bL28 from Limosilactobacillus reuteri (strain DSM 20016) (Lactobacillus reuteri).